A 59-amino-acid chain; its full sequence is Protein translocase subunit SecE (59 aa).

Residues 33 to 53 (GAGIALVGLLGFIIFAVMTFV) form a helical membrane-spanning segment.

Belongs to the SecE/SEC61-gamma family. Component of the Sec protein translocase complex. Heterotrimer consisting of SecY (alpha), SecG (beta) and SecE (gamma) subunits. The heterotrimers can form oligomers, although 1 heterotrimer is thought to be able to translocate proteins. Interacts with the ribosome. May interact with SecDF, and other proteins may be involved.

Its subcellular location is the cell membrane. Functionally, essential subunit of the Sec protein translocation channel SecYEG. Clamps together the 2 halves of SecY. May contact the channel plug during translocation. The sequence is that of Protein translocase subunit SecE from Haloarcula marismortui (strain ATCC 43049 / DSM 3752 / JCM 8966 / VKM B-1809) (Halobacterium marismortui).